Here is a 371-residue protein sequence, read N- to C-terminus: DNA replication and repair protein RecF (371 aa).

ATP is bound at residue 30–37 (GPNAQGKT).

It belongs to the RecF family.

It localises to the cytoplasm. Its function is as follows. The RecF protein is involved in DNA metabolism; it is required for DNA replication and normal SOS inducibility. RecF binds preferentially to single-stranded, linear DNA. It also seems to bind ATP. The sequence is that of DNA replication and repair protein RecF from Desulforamulus reducens (strain ATCC BAA-1160 / DSM 100696 / MI-1) (Desulfotomaculum reducens).